Reading from the N-terminus, the 389-residue chain is S-adenosylmethionine synthase (389 aa).

An ATP-binding site is contributed by His-17. Asp-19 provides a ligand contact to Mg(2+). Glu-45 serves as a coordination point for K(+). Glu-58 and Gln-102 together coordinate L-methionine. Residues Gln-102 to Ala-112 form a flexible loop region. Residues Asp-167 to Lys-169, Asp-241, Arg-247 to Lys-248, Ala-264, and Lys-268 contribute to the ATP site. Position 241 (Asp-241) interacts with L-methionine. Residue Lys-272 participates in L-methionine binding.

Belongs to the AdoMet synthase family. As to quaternary structure, homotetramer; dimer of dimers. The cofactor is Mg(2+). K(+) serves as cofactor.

The protein localises to the cytoplasm. It carries out the reaction L-methionine + ATP + H2O = S-adenosyl-L-methionine + phosphate + diphosphate. Its pathway is amino-acid biosynthesis; S-adenosyl-L-methionine biosynthesis; S-adenosyl-L-methionine from L-methionine: step 1/1. Its function is as follows. Catalyzes the formation of S-adenosylmethionine (AdoMet) from methionine and ATP. The overall synthetic reaction is composed of two sequential steps, AdoMet formation and the subsequent tripolyphosphate hydrolysis which occurs prior to release of AdoMet from the enzyme. The chain is S-adenosylmethionine synthase from Parvibaculum lavamentivorans (strain DS-1 / DSM 13023 / NCIMB 13966).